A 229-amino-acid chain; its full sequence is MLTAMRGDIRAARERDPAAPTALEVIFCYPGVHAVWGHRLAHWLWQRGARLLARAAAEFTRILTGVDIHPGAVIGARVFIDHATGVVIGETAEVGDDVTIYHGVTLGGSGMVGGKRHPTVGDRVIIGAGAKVLGPIKIGEDSRIGANAVVVKPVPPSAVVVGVPGQVIGQSQPSPGGPFDWRLPDLVGASLDSLLTRVARLEALGGGPQAAGVIRPPEAGIWHGEDFSI.

It belongs to the transferase hexapeptide repeat family.

It is found in the cytoplasm. It carries out the reaction L-serine + acetyl-CoA = O-acetyl-L-serine + CoA. The protein operates within amino-acid biosynthesis; L-cysteine biosynthesis; L-cysteine from L-serine: step 1/2. Functionally, catalyzes the acetylation of serine by acetyl-CoA to produce O-acetylserine (OAS). The sequence is that of Serine acetyltransferase (cysE) from Mycobacterium tuberculosis (strain ATCC 25618 / H37Rv).